A 309-amino-acid polypeptide reads, in one-letter code: Oxidoreductase NAD-binding domain-containing protein 1 (309 aa).

A signal peptide spans 1-14 (MVVVIPRLLRGSLG). The region spanning 47–161 (HLERTADVVR…VGGEFFFDPK (115 aa)) is the FAD-binding FR-type domain. 175 to 180 (GVGINP) lines the NAD(+) pocket.

The polypeptide is Oxidoreductase NAD-binding domain-containing protein 1 (OXNAD1) (Bos taurus (Bovine)).